The following is a 367-amino-acid chain: tRNA-specific 2-thiouridylase MnmA (367 aa).

ATP contacts are provided by residues 6–13 (AMSGGVDS) and M32. C101 functions as the Nucleophile in the catalytic mechanism. A disulfide bond links C101 and C193. An ATP-binding site is contributed by G125. The interaction with tRNA stretch occupies residues 143 to 145 (KDQ). The active-site Cysteine persulfide intermediate is C193.

This sequence belongs to the MnmA/TRMU family.

It is found in the cytoplasm. It catalyses the reaction S-sulfanyl-L-cysteinyl-[protein] + uridine(34) in tRNA + AH2 + ATP = 2-thiouridine(34) in tRNA + L-cysteinyl-[protein] + A + AMP + diphosphate + H(+). In terms of biological role, catalyzes the 2-thiolation of uridine at the wobble position (U34) of tRNA, leading to the formation of s(2)U34. The sequence is that of tRNA-specific 2-thiouridylase MnmA from Mycobacterium tuberculosis (strain CDC 1551 / Oshkosh).